The chain runs to 279 residues: Orotidine 5'-phosphate decarboxylase (279 aa).

Substrate contacts are provided by residues Asp8, Lys30, 58–67 (DLKFHDIPNT), Thr117, Arg177, Gln186, Gly206, and Arg207. Residue Lys60 is the Proton donor of the active site.

It belongs to the OMP decarboxylase family. Type 1 subfamily. In terms of assembly, homodimer.

It carries out the reaction orotidine 5'-phosphate + H(+) = UMP + CO2. It functions in the pathway pyrimidine metabolism; UMP biosynthesis via de novo pathway; UMP from orotate: step 2/2. Its function is as follows. Catalyzes the decarboxylation of orotidine 5'-monophosphate (OMP) to uridine 5'-monophosphate (UMP). The chain is Orotidine 5'-phosphate decarboxylase from Campylobacter jejuni subsp. jejuni serotype O:2 (strain ATCC 700819 / NCTC 11168).